Reading from the N-terminus, the 193-residue chain is DNA damage-inducible transcript 4-like protein (193 aa).

It belongs to the DDIT4 family.

Its subcellular location is the cytoplasm. In terms of biological role, inhibits cell growth by regulating the TOR signaling pathway upstream of the TSC1-TSC2 complex and downstream of AKT1. This is DNA damage-inducible transcript 4-like protein (Ddit4l) from Mus musculus (Mouse).